The primary structure comprises 784 residues: Ribosome biogenesis protein BOP1 homolog (784 aa).

The span at 1–11 shows a compositional bias: basic residues; it reads MTKKLALKRKG. The tract at residues 1–159 is disordered; the sequence is MTKKLALKRK…DSDTSDEEDI (159 aa). Composition is skewed to acidic residues over residues 27–36, 45–54, 62–73, and 84–111; these read SENEEEEEDL, EDSTDDEGID, SEELQFESDEEG, and AEEDEESSDEDDDEEEGSSDEEGEEDEE. A compositionally biased stretch (basic and acidic residues) spans 112–123; sequence KDSKSKQADDKP. Residues 124 to 133 show a composition bias toward low complexity; sequence SSSGAASKKA. Basic and acidic residues predominate over residues 138-148; it reads LSKRDTSKPEY. Acidic residues predominate over residues 149–158; that stretch reads QDSDTSDEED. WD repeat units follow at residues 445 to 486, 488 to 526, 570 to 612, 615 to 653, 656 to 695, 699 to 738, and 754 to 784; these read GHTD…RTIE, DEVVRCVAWCPNPKLSIIAVATGNRLLLVNPKVGDKVLV, THFK…SQIP, KSKGLIQFVLFHPVKPCFFVATQHNIRIYDLVKQELVKK, TNSKWISGMSIHPKGDNLLVSTYDKKMLWFDLDLSTKPYQ, LHRNAVRSVAFHLRYPLFASGSDDQAVIVSHGMVYNDLLQ, and RDEFGVLDVNWHPVQPWIFSTGADSTIRLYT.

Belongs to the WD repeat BOP1/ERB1 family.

It is found in the nucleus. It localises to the nucleolus. The protein resides in the nucleoplasm. Required for maturation of ribosomal RNAs and formation of the large ribosomal subunit. The sequence is that of Ribosome biogenesis protein BOP1 homolog from Drosophila yakuba (Fruit fly).